The primary structure comprises 296 residues: MKKLLLIIITVFFAFNVAQASLPNIVASVNYEPITLNEFRARKKMIMALNNVESLTPAQDKQLSDLAIKSLIDESLLFQYAGDREIPQEEIDNAIKSIEDHNKMPHGSLLQYLKSRSVNPDSFISQIKSELIKMNILSSLSRSVQVSNKEIDVAILSSDQKDVEISMQVFTSKDGGNKAFTQMNNLKNRLKKCADVKKSLYDNFATMQIITDKLSKIEGVKQTIVKDLSSDKASNVFEVNNKFEIILVCSKKILNVNEDENNYVVNFLTNKKISQKAQKMFENMRKKAVIKIMLPS.

The N-terminal stretch at 1–20 is a signal peptide; the sequence is MKKLLLIIITVFFAFNVAQA.

This is an uncharacterized protein from Rickettsia felis (strain ATCC VR-1525 / URRWXCal2) (Rickettsia azadi).